Consider the following 88-residue polypeptide: uncharacterized protein (88 aa).

Residues 1–22 (MLKASILFITISLTLMLENSYG) form the signal peptide. Disulfide bonds link C59-C73, C66-C77, and C72-C82.

The protein resides in the secreted. This is an uncharacterized protein from Schistosoma japonicum (Blood fluke).